The sequence spans 419 residues: Gamma-glutamyl phosphate reductase (419 aa).

The protein belongs to the gamma-glutamyl phosphate reductase family.

The protein resides in the cytoplasm. The catalysed reaction is L-glutamate 5-semialdehyde + phosphate + NADP(+) = L-glutamyl 5-phosphate + NADPH + H(+). It participates in amino-acid biosynthesis; L-proline biosynthesis; L-glutamate 5-semialdehyde from L-glutamate: step 2/2. Functionally, catalyzes the NADPH-dependent reduction of L-glutamate 5-phosphate into L-glutamate 5-semialdehyde and phosphate. The product spontaneously undergoes cyclization to form 1-pyrroline-5-carboxylate. The polypeptide is Gamma-glutamyl phosphate reductase (Bordetella avium (strain 197N)).